We begin with the raw amino-acid sequence, 430 residues long: Adenylosuccinate synthetase (430 aa).

Residues 12-18 (GDEGKGK) and 40-42 (GHT) each bind GTP. Residue aspartate 13 is the Proton acceptor of the active site. Mg(2+) contacts are provided by aspartate 13 and glycine 40. Residues 13–16 (DEGK), 38–41 (NAGH), threonine 128, arginine 142, glutamine 223, threonine 238, and arginine 302 contribute to the IMP site. Histidine 41 serves as the catalytic Proton donor. Residue 298–304 (VNTGRKR) coordinates substrate. Residues arginine 304, 330 to 332 (KLD), and 412 to 414 (GVG) each bind GTP.

The protein belongs to the adenylosuccinate synthetase family. Homodimer. Mg(2+) serves as cofactor.

It localises to the cytoplasm. The catalysed reaction is IMP + L-aspartate + GTP = N(6)-(1,2-dicarboxyethyl)-AMP + GDP + phosphate + 2 H(+). It functions in the pathway purine metabolism; AMP biosynthesis via de novo pathway; AMP from IMP: step 1/2. Functionally, plays an important role in the de novo pathway of purine nucleotide biosynthesis. Catalyzes the first committed step in the biosynthesis of AMP from IMP. This chain is Adenylosuccinate synthetase, found in Corynebacterium glutamicum (strain ATCC 13032 / DSM 20300 / JCM 1318 / BCRC 11384 / CCUG 27702 / LMG 3730 / NBRC 12168 / NCIMB 10025 / NRRL B-2784 / 534).